The chain runs to 525 residues: Light-independent protochlorophyllide reductase subunit B (525 aa).

D36 lines the [4Fe-4S] cluster pocket. Residue D286 is the Proton donor of the active site. Substrate is bound at residue 421-422; the sequence is GL.

The protein belongs to the ChlB/BchB/BchZ family. Protochlorophyllide reductase is composed of three subunits; ChlL, ChlN and ChlB. Forms a heterotetramer of two ChlB and two ChlN subunits. [4Fe-4S] cluster is required as a cofactor.

The enzyme catalyses chlorophyllide a + oxidized 2[4Fe-4S]-[ferredoxin] + 2 ADP + 2 phosphate = protochlorophyllide a + reduced 2[4Fe-4S]-[ferredoxin] + 2 ATP + 2 H2O. The protein operates within porphyrin-containing compound metabolism; chlorophyll biosynthesis (light-independent). Functionally, component of the dark-operative protochlorophyllide reductase (DPOR) that uses Mg-ATP and reduced ferredoxin to reduce ring D of protochlorophyllide (Pchlide) to form chlorophyllide a (Chlide). This reaction is light-independent. The NB-protein (ChlN-ChlB) is the catalytic component of the complex. In Prochlorococcus marinus (strain NATL1A), this protein is Light-independent protochlorophyllide reductase subunit B.